The chain runs to 682 residues: TBC1 domain family member 23 (682 aa).

A Rab-GAP TBC domain is found at 29-210 (PVPCDLRTKV…AIWDNYLQQA (182 aa)). A Rhodanese domain is found at 318–426 (DGVRFFVVDC…GFMALQQHLA (109 aa)).

The protein resides in the golgi apparatus. It localises to the trans-Golgi network. It is found in the cytoplasmic vesicle. Functionally, putative Rab GTPase-activating protein which plays a role in vesicular trafficking. Involved in endosome-to-Golgi trafficking. Acts as a bridging protein by binding simultaneously to golgins, located at the trans-Golgi, and to the WASH complex, located on endosome-derived vesicles. Plays a role in brain development. May act as a general inhibitor of innate immunity signaling. The chain is TBC1 domain family member 23 (tbc1d23) from Xenopus laevis (African clawed frog).